A 195-amino-acid polypeptide reads, in one-letter code: Imidazoleglycerol-phosphate dehydratase (195 aa).

This sequence belongs to the imidazoleglycerol-phosphate dehydratase family.

The protein resides in the cytoplasm. It catalyses the reaction D-erythro-1-(imidazol-4-yl)glycerol 3-phosphate = 3-(imidazol-4-yl)-2-oxopropyl phosphate + H2O. The protein operates within amino-acid biosynthesis; L-histidine biosynthesis; L-histidine from 5-phospho-alpha-D-ribose 1-diphosphate: step 6/9. This Burkholderia ambifaria (strain MC40-6) protein is Imidazoleglycerol-phosphate dehydratase.